A 106-amino-acid chain; its full sequence is Iron-sulfur cluster assembly protein CyaY (106 aa).

It belongs to the frataxin family.

Involved in iron-sulfur (Fe-S) cluster assembly. May act as a regulator of Fe-S biogenesis. This is Iron-sulfur cluster assembly protein CyaY from Salmonella paratyphi B (strain ATCC BAA-1250 / SPB7).